We begin with the raw amino-acid sequence, 715 residues long: Formate dehydrogenase H (715 aa).

One can recognise a 4Fe-4S Mo/W bis-MGD-type domain in the interval 1–56; it reads MKKVVTVCPYCASGCKINLVVDNGKIVRAEAAQGKTNQGTLCLKGYYGWDFINDTQ. [4Fe-4S] cluster contacts are provided by cysteine 8, cysteine 11, cysteine 15, and cysteine 42. The Electron donor/acceptor role is filled by lysine 44. Positions 110, 140, 176, 179, 180, 201, 202, 204, 221, 223, 297, 335, 404, 408, 428, 429, 445, 478, 581, 582, 585, 587, 678, and 679 each coordinate Mo-bis(molybdopterin guanine dinucleotide). The active-site Proton donor/acceptor is the selenocysteine 140. A non-standard amino acid (selenocysteine) is located at residue selenocysteine 140.

It belongs to the prokaryotic molybdopterin-containing oxidoreductase family. Consists of two separable enzymatic activities: a formate dehydrogenase component (FDH-H) and hydrogenase-3. The cofactor is [4Fe-4S] cluster. Mo-bis(molybdopterin guanine dinucleotide) serves as cofactor.

It catalyses the reaction formate + A + H(+) = AH2 + CO2. Its activity is regulated as follows. Inhibited by aerobic conditions. In terms of biological role, decomposes formic acid to hydrogen and carbon dioxide under anaerobic conditions in the absence of exogenous electron acceptors. This is Formate dehydrogenase H (fdhF) from Escherichia coli (strain K12).